A 329-amino-acid polypeptide reads, in one-letter code: Vitamin B12 import system permease protein BtuC (329 aa).

The next 9 helical transmembrane spans lie at 22–42, 64–84, 91–111, 115–135, 149–169, 187–207, 243–263, 277–297, and 305–325; these read LSVL…QWIA, LAVL…QALF, PGLL…VLLG, LPGW…TLIL, LLAG…AIYF, GGVD…SLWI, GWMV…GLVI, ALLP…DVIA, and ELPI…WLLL.

Belongs to the binding-protein-dependent transport system permease family. FecCD subfamily. As to quaternary structure, the complex is composed of two ATP-binding proteins (BtuD), two transmembrane proteins (BtuC) and a solute-binding protein (BtuF).

It localises to the cell inner membrane. Its function is as follows. Part of the ABC transporter complex BtuCDF involved in vitamin B12 import. Involved in the translocation of the substrate across the membrane. In Citrobacter koseri (strain ATCC BAA-895 / CDC 4225-83 / SGSC4696), this protein is Vitamin B12 import system permease protein BtuC.